Consider the following 902-residue polypeptide: MLIPSKLSRPVRLDHTVVRERLLAKLSGANNFRLALVTSPAGYGKTTLVSQWAAGKNELGWYSLDEGDNQQERFASYLIAAIQQATGGHCSTSEAMAQKRQYASLTSLFAQLFIELAQWHRPLYLVIDDYHLITNPVIHDAMRFFLRHQPENFTLVVLSRNLPQLGIANLRVRDQLLEIGSQQLAFNHQEAKQFFDRRLSSPIEAAESSRMCDDVAGWATALQLIALSARQNHTSAHHSARRLAGINASHLSDYLVDEVLDNVDVSTRHFLLKSAILRSMNDALIVRVTGEENGQMRLEEIERQGLFLQRMDDTGEWFSYHPLFGSFLRQRCQWELAAELPEIHRAAAESWMEQGFPSEAIHHALAAGDAQMLRDILLNHAWGLFNHSELALLEESLKALPWESLLENPRLVLLQAWLMQSQHRYSEVNTLLARAEQEIKGVMDGTLHAEFNALRAQVAINDGNPEEAERLAKLALDELPLAWFYSRIVATSVHGEVLHCKGDLSQSLSLMQQTEQMARHHDVWHYALWSLIQQSEIQFAQGFLQAAWETQERAFQLIKEQQHLEQLPMHEFLVRIRAQLLWAWARLDEAEASARSGIAVLSTFQPQQQLQCLTLLVQCSLARGDLDNARSQLNRLENLLGNGRYHCDWISNADKVRVIYWQLTGDKKSAANWLRHTPKPAFANNHFLQGQWRNIARAQILLGEFEPAEIVLEELNENARSLRLMSDLNRNLLLLNQLYWQSGRKNDAQRVLLDALQLANRTGFISHFVIEGEAMAQQLRQLIQLNTLPEMEQHRAQRILREINQHHRHKFAHFDEGFVERLLNHPDVPELIRTSPLTQREWQVLGLIYSGYSNEQIAGELAVAATTIKTHIRNLYQKLGVAHRQDAVQHAQQLLKMMGYGV.

39 to 46 (SPAGYGKT) provides a ligand contact to ATP. Residues 830-895 (ELIRTSPLTQ…DAVQHAQQLL (66 aa)) form the HTH luxR-type domain. The segment at residues 854-873 (NEQIAGELAVAATTIKTHIR) is a DNA-binding region (H-T-H motif).

Belongs to the MalT family. In terms of assembly, monomer in solution. Oligomerizes to an active state in the presence of the positive effectors ATP and maltotriose.

Activated by ATP and maltotriose, which are both required for DNA binding. Its function is as follows. Positively regulates the transcription of the maltose regulon whose gene products are responsible for uptake and catabolism of malto-oligosaccharides. Specifically binds to the promoter region of its target genes, recognizing a short DNA motif called the MalT box. The polypeptide is HTH-type transcriptional regulator MalT (Salmonella dublin (strain CT_02021853)).